The following is a 923-amino-acid chain: Carnitine O-acetyltransferase YAT2 (923 aa).

Residues 1–11 (MSSGSTIVSSD) are compositionally biased toward polar residues. 2 disordered regions span residues 1-21 (MSSG…KHEE) and 197-232 (NKPY…KRKH). An N-acetylserine modification is found at serine 2. A compositionally biased stretch (basic and acidic residues) spans 12–21 (KSGRTFKHEE). Residues 204–219 (DLEDPDYSSDEDDNDE) show a composition bias toward acidic residues. Over residues 220 to 232 (PTQKDFDDRKRKH) the composition is skewed to basic and acidic residues. Residues 529-541 (GRRS…VKPD) and serine 567 contribute to the CoA site. Serine 576 is a binding site for (R)-carnitine. Positions 763–787 (NAVNNPPKRNGHTVNGSRKTSSSSQ) are disordered. Over residues 774–787 (HTVNGSRKTSSSSQ) the composition is skewed to polar residues. Serine 783 bears the Phosphoserine mark.

It belongs to the carnitine/choline acetyltransferase family.

It localises to the cytoplasm. It carries out the reaction (R)-carnitine + acetyl-CoA = O-acetyl-(R)-carnitine + CoA. Functionally, carnitine O-acetyltransferase involved in the shutteling of acetyl-CoA in the cell. This Saccharomyces cerevisiae (strain ATCC 204508 / S288c) (Baker's yeast) protein is Carnitine O-acetyltransferase YAT2.